The sequence spans 400 residues: Argininosuccinate synthase (400 aa).

Residue 8 to 16 (AYSGGLDTS) coordinates ATP. Residue tyrosine 87 participates in L-citrulline binding. Glycine 117 is a binding site for ATP. L-aspartate contacts are provided by threonine 119, asparagine 123, and aspartate 124. An L-citrulline-binding site is contributed by asparagine 123. 4 residues coordinate L-citrulline: arginine 127, serine 175, glutamate 260, and tyrosine 272.

Belongs to the argininosuccinate synthase family. Type 1 subfamily. In terms of assembly, homotetramer.

Its subcellular location is the cytoplasm. It catalyses the reaction L-citrulline + L-aspartate + ATP = 2-(N(omega)-L-arginino)succinate + AMP + diphosphate + H(+). Its pathway is amino-acid biosynthesis; L-arginine biosynthesis; L-arginine from L-ornithine and carbamoyl phosphate: step 2/3. The polypeptide is Argininosuccinate synthase (Mycobacterium sp. (strain JLS)).